A 254-amino-acid chain; its full sequence is MRGFFGKAIFVVLAVFIMMPLLGIEAVRASELQQHVYDRAHLLSKAEIGKLESLSAKLGAKRDTDFIIITTKSTNGEDIADYTGDFYDRYGKGSTAILTIDMTNREVFIAGFKKAEQYLDNSRLNSIRNTISSDLSNENYFEAFETYIQLSYKDMGIKPGVNPDNIFFTWWFQLIAAIAVGGIAVSIMLYHAGGKVTVNGSTYMDQRTSDVIDQYDTYIRTTVTRERKPSDKDSGSDGGVTKGGTSYSGSRGSF.

Residues 1 to 29 (MRGFFGKAIFVVLAVFIMMPLLGIEAVRA) form the signal peptide. A helical transmembrane segment spans residues 166 to 186 (IFFTWWFQLIAAIAVGGIAVS). The segment covering 223–235 (VTRERKPSDKDSG) has biased composition (basic and acidic residues). Positions 223–254 (VTRERKPSDKDSGSDGGVTKGGTSYSGSRGSF) are disordered. The segment covering 243–254 (GGTSYSGSRGSF) has biased composition (polar residues).

It belongs to the UPF0603 family.

It is found in the cell membrane. The sequence is that of UPF0603 protein YdjH (ydjH) from Bacillus subtilis (strain 168).